The primary structure comprises 480 residues: Cysteine--tRNA ligase (480 aa).

Cysteine 27 provides a ligand contact to Zn(2+). The 'HIGH' region motif lies at 29 to 39; that stretch reads PTVYNYAHIGN. 3 residues coordinate Zn(2+): cysteine 221, histidine 246, and glutamate 250. Positions 278-282 match the 'KMSKS' region motif; the sequence is KMSKS. Position 281 (lysine 281) interacts with ATP.

The protein belongs to the class-I aminoacyl-tRNA synthetase family. As to quaternary structure, monomer. It depends on Zn(2+) as a cofactor.

The protein localises to the cytoplasm. It catalyses the reaction tRNA(Cys) + L-cysteine + ATP = L-cysteinyl-tRNA(Cys) + AMP + diphosphate. This chain is Cysteine--tRNA ligase, found in Borreliella burgdorferi (strain ZS7) (Borrelia burgdorferi).